We begin with the raw amino-acid sequence, 147 residues long: D-aminoacyl-tRNA deacylase (147 aa).

The Gly-cisPro motif, important for rejection of L-amino acids motif lies at 137–138; the sequence is GP.

It belongs to the DTD family. Homodimer.

The protein resides in the cytoplasm. It carries out the reaction glycyl-tRNA(Ala) + H2O = tRNA(Ala) + glycine + H(+). The enzyme catalyses a D-aminoacyl-tRNA + H2O = a tRNA + a D-alpha-amino acid + H(+). In terms of biological role, an aminoacyl-tRNA editing enzyme that deacylates mischarged D-aminoacyl-tRNAs. Also deacylates mischarged glycyl-tRNA(Ala), protecting cells against glycine mischarging by AlaRS. Acts via tRNA-based rather than protein-based catalysis; rejects L-amino acids rather than detecting D-amino acids in the active site. By recycling D-aminoacyl-tRNA to D-amino acids and free tRNA molecules, this enzyme counteracts the toxicity associated with the formation of D-aminoacyl-tRNA entities in vivo and helps enforce protein L-homochirality. The protein is D-aminoacyl-tRNA deacylase of Acinetobacter baumannii (strain ACICU).